Reading from the N-terminus, the 200-residue chain is Glycerol-3-phosphate acyltransferase (200 aa).

The next 5 helical transmembrane spans lie at 2–22, 51–71, 84–104, 113–133, and 143–163; these read IHLL…AVIV, TAAI…VVAA, IVLL…FFGF, ALGI…ATWV, and SLSA…LLGW.

Belongs to the PlsY family. In terms of assembly, probably interacts with PlsX.

The protein resides in the cell inner membrane. The catalysed reaction is an acyl phosphate + sn-glycerol 3-phosphate = a 1-acyl-sn-glycero-3-phosphate + phosphate. It functions in the pathway lipid metabolism; phospholipid metabolism. Functionally, catalyzes the transfer of an acyl group from acyl-phosphate (acyl-PO(4)) to glycerol-3-phosphate (G3P) to form lysophosphatidic acid (LPA). This enzyme utilizes acyl-phosphate as fatty acyl donor, but not acyl-CoA or acyl-ACP. In Thiobacillus denitrificans (strain ATCC 25259 / T1), this protein is Glycerol-3-phosphate acyltransferase.